Consider the following 359-residue polypeptide: Chondroadherin (359 aa).

Positions 1 to 22 are cleaved as a signal peptide; the sequence is MVRPMLLLSLGLLAGLLPALAA. A disulfide bridge links Cys-23 with Cys-38. Residues 23–52 form the LRRNT domain; sequence CPQNCHCHSDLQHVICDKVGLQKIPKVSEK. LRR repeat units lie at residues 76 to 97, 100 to 121, 124 to 145, 148 to 169, 172 to 193, 196 to 217, 220 to 241, 245 to 266, and 269 to 290; these read NLVS…AFRG, QLIY…AFDD, ELTY…LLSP, NLFI…AFQG, DLRW…ALDD, NLAK…ALSK, VVEE…AFQS, YLET…AFLG, and TLKH…FPFD. An O-linked (GalNAc...) serine glycan is attached at Ser-144. The LRRCT domain maps to 300 to 348; sequence NPWKCTCQLRGLRRWLEAKASRPDATCASPAKFKGQHIRDTDAFRSCKF. 2 cysteine pairs are disulfide-bonded: Cys-304/Cys-346 and Cys-306/Cys-326.

It belongs to the small leucine-rich proteoglycan (SLRP) family. SLRP class IV subfamily. Mostly monomeric. Interacts with collagen type II. As to expression, present in chondrocytes at all ages.

It is found in the secreted. It localises to the extracellular space. The protein localises to the extracellular matrix. In terms of biological role, promotes attachment of chondrocytes, fibroblasts, and osteoblasts. This binding is mediated (at least for chondrocytes and fibroblasts) by the integrin alpha(2)beta(1). May play an important role in the regulation of chondrocyte growth and proliferation. In Homo sapiens (Human), this protein is Chondroadherin (CHAD).